A 20-amino-acid chain; its full sequence is Peroxidase 1 (20 aa).

Residue His-14 coordinates heme. Thr-15 lines the Ca(2+) pocket.

It belongs to the peroxidase family. Classical plant (class III) peroxidase subfamily. It depends on Ca(2+) as a cofactor. Heme b is required as a cofactor.

It localises to the secreted. It carries out the reaction 2 a phenolic donor + H2O2 = 2 a phenolic radical donor + 2 H2O. Removal of H(2)O(2), oxidation of toxic reductants, biosynthesis and degradation of lignin, suberization, auxin catabolism, response to environmental stresses such as wounding, pathogen attack and oxidative stress. These functions might be dependent on each isozyme/isoform in each plant tissue. The sequence is that of Peroxidase 1 from Betula pendula (European white birch).